The primary structure comprises 287 residues: Elongation factor Ts (287 aa).

The segment at 80-83 (TDFL) is involved in Mg(2+) ion dislocation from EF-Tu.

The protein belongs to the EF-Ts family.

The protein localises to the cytoplasm. Its function is as follows. Associates with the EF-Tu.GDP complex and induces the exchange of GDP to GTP. It remains bound to the aminoacyl-tRNA.EF-Tu.GTP complex up to the GTP hydrolysis stage on the ribosome. This chain is Elongation factor Ts, found in Pseudomonas fluorescens (strain Pf0-1).